Here is a 375-residue protein sequence, read N- to C-terminus: tRNA (guanine(26)-N(2))-dimethyltransferase (375 aa).

The Trm1 methyltransferase domain maps to Lys2–Ile368. S-adenosyl-L-methionine contacts are provided by Arg35, Arg66, Asp89, Asp116, and Ala117.

It belongs to the class I-like SAM-binding methyltransferase superfamily. Trm1 family.

The catalysed reaction is guanosine(26) in tRNA + 2 S-adenosyl-L-methionine = N(2)-dimethylguanosine(26) in tRNA + 2 S-adenosyl-L-homocysteine + 2 H(+). Functionally, dimethylates a single guanine residue at position 26 of a number of tRNAs using S-adenosyl-L-methionine as donor of the methyl groups. The polypeptide is tRNA (guanine(26)-N(2))-dimethyltransferase (Methanococcus aeolicus (strain ATCC BAA-1280 / DSM 17508 / OCM 812 / Nankai-3)).